A 201-amino-acid polypeptide reads, in one-letter code: 3-isopropylmalate dehydratase small subunit (201 aa).

This sequence belongs to the LeuD family. LeuD type 1 subfamily. In terms of assembly, heterodimer of LeuC and LeuD.

It carries out the reaction (2R,3S)-3-isopropylmalate = (2S)-2-isopropylmalate. It functions in the pathway amino-acid biosynthesis; L-leucine biosynthesis; L-leucine from 3-methyl-2-oxobutanoate: step 2/4. In terms of biological role, catalyzes the isomerization between 2-isopropylmalate and 3-isopropylmalate, via the formation of 2-isopropylmaleate. This chain is 3-isopropylmalate dehydratase small subunit, found in Escherichia fergusonii (strain ATCC 35469 / DSM 13698 / CCUG 18766 / IAM 14443 / JCM 21226 / LMG 7866 / NBRC 102419 / NCTC 12128 / CDC 0568-73).